The following is a 23-amino-acid chain: Aurein-4.3 (23 aa).

This sequence belongs to the frog skin active peptide (FSAP) family. Aurein subfamily. In terms of tissue distribution, expressed by the skin dorsal glands.

The protein localises to the secreted. In terms of biological role, has no antimicrobial or anticancer activity. The chain is Aurein-4.3 from Ranoidea aurea (Green and golden bell frog).